Here is an 80-residue protein sequence, read N- to C-terminus: Lantibiotic Flvalpha.a (80 aa).

Residues 1–38 (MNKNPIYRSEEEAKDIACGNVAAELDENSQALDAINGA) constitute a propeptide, cleaved by FlvT. A 2,3-didehydrobutyrine; by FlvM1 mark is found at T43 and T47. Residues 52–55 (TVGC) constitute a cross-link (beta-methyllanthionine (Thr-Cys); by FlvM1). The lanthionine (Ser-Cys); by FlvM1 cross-link spans 58 to 68 (SYGLGNGGYCC). 2 consecutive cross-links (beta-methyllanthionine (Thr-Cys); by FlvM1) follow at residues 69-74 (TYTVEC) and 71-78 (TVECSKTC).

The lanthionine formed by Ser-58 and Cys-68 forms a putative lipid II binding motif. Post-translationally, maturation of FlvA1 peptides involves the enzymatic conversion of Thr, and Ser into dehydrated AA and the formation of thioether bonds with cysteines. Modifications are processed by the flavecin synthetase FlvM1. This is followed by membrane translocation and cleavage of the modified precursor. In terms of processing, contains DL-lanthionine and DL-beta-methyllanthionine, when coepressed in E.coli with the flavecin synthetase FlvM1.

It localises to the secreted. In terms of biological role, lanthionine-containing peptide antibiotic (lantibiotic) only active on Gram-positive bacteria in synergy with Flvbeta peptides, which are encoded by the same operon than Flvalpha.a. Shows antibacterial activity in synergy with Flvbeta.b, Flvbeta.c, Flvbeta.e and Flvbeta.g. Does not show antibacterial activity when tested with Flvbeta.a, Flvbeta.d, Flvbeta.f and Flvbeta.h. The bactericidal activity of lantibiotics is based on depolarization of energized bacterial cytoplasmic membranes, initiated by the formation of aqueous transmembrane pores. The protein is Lantibiotic Flvalpha.a of Ruminococcus flavefaciens.